The sequence spans 149 residues: 3-dehydroquinate dehydratase (149 aa).

Residue tyrosine 26 is the Proton acceptor of the active site. Positions 77, 83, and 90 each coordinate substrate. Residue histidine 103 is the Proton donor of the active site. Substrate is bound by residues 104–105 (LS) and arginine 114.

This sequence belongs to the type-II 3-dehydroquinase family. Homododecamer.

It catalyses the reaction 3-dehydroquinate = 3-dehydroshikimate + H2O. Its pathway is metabolic intermediate biosynthesis; chorismate biosynthesis; chorismate from D-erythrose 4-phosphate and phosphoenolpyruvate: step 3/7. Functionally, catalyzes a trans-dehydration via an enolate intermediate. The protein is 3-dehydroquinate dehydratase of Haemophilus influenzae (strain 86-028NP).